We begin with the raw amino-acid sequence, 204 residues long: Peptidyl-tRNA hydrolase (204 aa).

Residue Tyr19 participates in tRNA binding. His24 functions as the Proton acceptor in the catalytic mechanism. Residues Tyr70, Asn72, and Asn118 each coordinate tRNA.

Belongs to the PTH family. In terms of assembly, monomer.

The protein resides in the cytoplasm. The catalysed reaction is an N-acyl-L-alpha-aminoacyl-tRNA + H2O = an N-acyl-L-amino acid + a tRNA + H(+). In terms of biological role, hydrolyzes ribosome-free peptidyl-tRNAs (with 1 or more amino acids incorporated), which drop off the ribosome during protein synthesis, or as a result of ribosome stalling. Catalyzes the release of premature peptidyl moieties from peptidyl-tRNA molecules trapped in stalled 50S ribosomal subunits, and thus maintains levels of free tRNAs and 50S ribosomes. The polypeptide is Peptidyl-tRNA hydrolase (Prochlorococcus marinus (strain SARG / CCMP1375 / SS120)).